A 442-amino-acid polypeptide reads, in one-letter code: HTH-type transcriptional regulator NorG (442 aa).

In terms of domain architecture, HTH gntR-type spans Lys2–Tyr46. Residues Gln6–Glu25 constitute a DNA-binding region (H-T-H motif). At Lys288 the chain carries N6-(pyridoxal phosphate)lysine.

It in the C-terminal section; belongs to the class-I pyridoxal-phosphate-dependent aminotransferase family. The cofactor is pyridoxal 5'-phosphate.

Functionally, positively regulates the expression of the NorB efflux pump and negatively regulates the expression of the AbcA efflux pump. Binds specifically to the promoters of norA, norB and norC and abcA genes. Could also have an aminotransferase activity. The protein is HTH-type transcriptional regulator NorG (norG) of Staphylococcus aureus (strain bovine RF122 / ET3-1).